Consider the following 222-residue polypeptide: Large ribosomal subunit protein uL4 (222 aa).

A disordered region spans residues 42 to 100 (AAGRQGTHSTKTRGEVRGGGKKPYRQKGTGRARQGSVRAPQFTGGGTVHGPKPRDYAQR). Over residues 60 to 71 (GGKKPYRQKGTG) the composition is skewed to basic residues.

It belongs to the universal ribosomal protein uL4 family. Part of the 50S ribosomal subunit.

In terms of biological role, one of the primary rRNA binding proteins, this protein initially binds near the 5'-end of the 23S rRNA. It is important during the early stages of 50S assembly. It makes multiple contacts with different domains of the 23S rRNA in the assembled 50S subunit and ribosome. Forms part of the polypeptide exit tunnel. In Thermobifida fusca (strain YX), this protein is Large ribosomal subunit protein uL4.